The sequence spans 206 residues: Small ribosomal subunit protein uS4 (206 aa).

Positions 96-156 constitute an S4 RNA-binding domain; it reads CRLDNVVYRM…EKAKNQLRIV (61 aa).

It belongs to the universal ribosomal protein uS4 family. In terms of assembly, part of the 30S ribosomal subunit. Contacts protein S5. The interaction surface between S4 and S5 is involved in control of translational fidelity.

One of the primary rRNA binding proteins, it binds directly to 16S rRNA where it nucleates assembly of the body of the 30S subunit. Its function is as follows. With S5 and S12 plays an important role in translational accuracy. The chain is Small ribosomal subunit protein uS4 from Pseudomonas fluorescens (strain SBW25).